The sequence spans 147 residues: Hemoglobin subunit beta-1 (147 aa).

The region spanning 3–147 is the Globin domain; it reads HWTDFERSTI…VVFSLGKQYH (145 aa). Residues histidine 64 and histidine 93 each contribute to the heme b site.

This sequence belongs to the globin family. Hb1 is a heterotetramer of two alpha-1 chains and two beta-1 chains. As to expression, red blood cells.

Functionally, involved in oxygen transport from gills to the various peripheral tissues. The protein is Hemoglobin subunit beta-1 of Liparis tunicatus (Kelp snailfish).